Here is a 354-residue protein sequence, read N- to C-terminus: Ubiquinol oxidase 1a, mitochondrial (354 aa).

Residues 1–62 (MMITRGGAKA…RAPTIGGMRF (62 aa)) constitute a mitochondrion transit peptide. The disordered stretch occupies residues 68–99 (LGEKTPMKEEDANQKKTENESTGGDAAGGNNK). Positions 72 to 86 (TPMKEEDANQKKTEN) are enriched in basic and acidic residues. The helical transmembrane segment at 179-199 (AMMLETVAAVPGMVGGMLLHC) threads the bilayer. The Fe cation site is built by Glu183, Glu222, and His225. Residues 241 to 261 (ALVITVQGVFFNAYFLGYLIS) traverse the membrane as a helical segment. Fe cation is bound by residues Glu273, Glu324, and His327.

The protein belongs to the alternative oxidase family. Homodimer; disulfide-linked. Requires Fe cation as cofactor. In terms of tissue distribution, expressed in roots, stems, cotyledons, leaves and flowers. High expression in sepals.

Its subcellular location is the mitochondrion inner membrane. It catalyses the reaction 2 a ubiquinol + O2 = 2 a ubiquinone + 2 H2O. Its activity is regulated as follows. When the two monomeric subunits are covalently linked by a S-S bond, the enzyme is essentially inactive. When the disulfide bond is reduced, its component sulfhydryls can associate with K-keto acids through formation of a thiohemiacetal, resulting in enzyme activation. Activated by glyoxylate, irrespective to the substitution found at Cys-127. That suggests the presence of a second activation site, possibly Cys-177. Catalyzes the cyanide-resistant oxidation of ubiquinol and the reduction of molecular oxygen to water, but does not translocate protons and consequently is not linked to oxidative phosphorylation. Increases respiration when the cytochrome respiratory pathway is restricted, or in response to low temperatures. This chain is Ubiquinol oxidase 1a, mitochondrial (AOX1A), found in Arabidopsis thaliana (Mouse-ear cress).